The following is a 208-amino-acid chain: Thymidylate kinase (208 aa).

Residue 10 to 17 participates in ATP binding; the sequence is GPEGSGKT.

Belongs to the thymidylate kinase family.

It carries out the reaction dTMP + ATP = dTDP + ADP. Phosphorylation of dTMP to form dTDP in both de novo and salvage pathways of dTTP synthesis. In Bacillus cereus (strain Q1), this protein is Thymidylate kinase.